Here is a 264-residue protein sequence, read N- to C-terminus: Acyl-[acyl-carrier-protein]--UDP-N-acetylglucosamine O-acyltransferase (264 aa).

Belongs to the transferase hexapeptide repeat family. LpxA subfamily. Homotrimer.

The protein localises to the cytoplasm. The catalysed reaction is a (3R)-hydroxyacyl-[ACP] + UDP-N-acetyl-alpha-D-glucosamine = a UDP-3-O-[(3R)-3-hydroxyacyl]-N-acetyl-alpha-D-glucosamine + holo-[ACP]. It functions in the pathway glycolipid biosynthesis; lipid IV(A) biosynthesis; lipid IV(A) from (3R)-3-hydroxytetradecanoyl-[acyl-carrier-protein] and UDP-N-acetyl-alpha-D-glucosamine: step 1/6. In terms of biological role, involved in the biosynthesis of lipid A, a phosphorylated glycolipid that anchors the lipopolysaccharide to the outer membrane of the cell. In Leptothrix cholodnii (strain ATCC 51168 / LMG 8142 / SP-6) (Leptothrix discophora (strain SP-6)), this protein is Acyl-[acyl-carrier-protein]--UDP-N-acetylglucosamine O-acyltransferase.